Consider the following 590-residue polypeptide: Phosphate-repressible phosphate permease pho-4 (590 aa).

A run of 8 helical transmembrane segments spans residues 6–26 (FDYL…NIGA), 44–64 (YLQA…GVGA), 85–105 (ALLM…LTMA), 118–138 (IMGG…VQWV), 149–169 (VFLA…IIFL), 186–206 (FVMV…LLLW), 220–240 (IAGT…IFLM), and 246–266 (IVIL…PLLL). Residues 267–466 (RRGEVPPPPA…GALPEKGKAD (200 aa)) are Cytoplasmic-facing. Residues 297-361 (ARRAAQNGDS…PQIKTMVGPR (65 aa)) are disordered. Over residues 313 to 322 (VTSSTSNPSA) the composition is skewed to polar residues. A compositionally biased stretch (basic and acidic residues) spans 325–345 (DGEKGATITKDDSSYSHDHSE). Transmembrane regions (helical) follow at residues 467–487 (VPVW…WTYG), 506–525 (GFSM…RLKL), 527–547 (VSTT…SGTW), and 561–581 (GWFI…GIII).

This sequence belongs to the inorganic phosphate transporter (PiT) (TC 2.A.20) family.

The protein resides in the cell membrane. Phosphate transport activity is competitively inhibited by vanadate and arsenate. Its function is as follows. High-affinity transporter for external inorganic phosphate. Acts probably as a sodium-phosphate symporter. Component of the high affinity phosphate transport system II (ptsII) necessary for scavenging phosphorus from the environment under conditions of limiting phosphorus. The chain is Phosphate-repressible phosphate permease pho-4 from Neurospora crassa (strain ATCC 24698 / 74-OR23-1A / CBS 708.71 / DSM 1257 / FGSC 987).